Here is a 489-residue protein sequence, read N- to C-terminus: Cytochrome P450 2C3 (489 aa).

Cys434 provides a ligand contact to heme.

The protein belongs to the cytochrome P450 family. The cofactor is heme.

Its subcellular location is the endoplasmic reticulum membrane. The protein resides in the microsome membrane. The catalysed reaction is an organic molecule + reduced [NADPH--hemoprotein reductase] + O2 = an alcohol + oxidized [NADPH--hemoprotein reductase] + H2O + H(+). Cytochromes P450 are a group of heme-thiolate monooxygenases. In liver microsomes, this enzyme is involved in an NADPH-dependent electron transport pathway. It oxidizes a variety of structurally unrelated compounds, including steroids, fatty acids, and xenobiotics. This is Cytochrome P450 2C3 (CYP2C3) from Oryctolagus cuniculus (Rabbit).